The sequence spans 220 residues: Peptide methionine sulfoxide reductase MsrA (220 aa).

Cys59 is an active-site residue.

Belongs to the MsrA Met sulfoxide reductase family.

It carries out the reaction L-methionyl-[protein] + [thioredoxin]-disulfide + H2O = L-methionyl-(S)-S-oxide-[protein] + [thioredoxin]-dithiol. The enzyme catalyses [thioredoxin]-disulfide + L-methionine + H2O = L-methionine (S)-S-oxide + [thioredoxin]-dithiol. In terms of biological role, has an important function as a repair enzyme for proteins that have been inactivated by oxidation. Catalyzes the reversible oxidation-reduction of methionine sulfoxide in proteins to methionine. This chain is Peptide methionine sulfoxide reductase MsrA, found in Corynebacterium kroppenstedtii (strain DSM 44385 / JCM 11950 / CIP 105744 / CCUG 35717).